The chain runs to 101 residues: Small ribosomal subunit protein uS14 (101 aa).

This sequence belongs to the universal ribosomal protein uS14 family. Part of the 30S ribosomal subunit. Contacts proteins S3 and S10.

In terms of biological role, binds 16S rRNA, required for the assembly of 30S particles and may also be responsible for determining the conformation of the 16S rRNA at the A site. The polypeptide is Small ribosomal subunit protein uS14 (Novosphingobium aromaticivorans (strain ATCC 700278 / DSM 12444 / CCUG 56034 / CIP 105152 / NBRC 16084 / F199)).